Here is a 735-residue protein sequence, read N- to C-terminus: Transcription factor RFX4 (735 aa).

Residues 27–59 form a disordered region; it reads NKRYSSHTSLGNVSNDENEEKENNRASKPHSTP. Over residues 32 to 41 the composition is skewed to polar residues; the sequence is SHTSLGNVSN. A DNA-binding region spans residues 44–126; that stretch reads NEEKENNRAS…RRLGTRGQSK (83 aa). The RFX-type winged-helix DNA-binding region spans 61–136; sequence TLQWLEENYE…YHYYGIAVKE (76 aa). A necessary for dimerization region spans residues 315–487; that stretch reads RFSQILRRQT…NELMRAMKGE (173 aa). Positions 501-538 are disordered; sequence EATPPTPSPGPSFSPAKSATSVEVPPPSSPVSNPSPEY.

The protein belongs to the RFX family. In terms of assembly, homodimer. Heterodimer with RFX2 and RFX3. Binds DNA. Interacts with GPS2. Isoform 1: Brain-specific. Isoform 2: Testis-specific. Isoform 1: Highly expressed in the suprachiasmatic nucleus, the central pacemaker site of the circadian clock (at protein level).

Its subcellular location is the nucleus. Transcription factor that plays a role in early brain development. May activate transcription by interacting directly with the X-box. May activate transcription from CX3CL1 promoter through the X-box during brain development. May be required for neural tube ciliogenesis during embryogenesis. In Mus musculus (Mouse), this protein is Transcription factor RFX4 (Rfx4).